The following is a 283-amino-acid chain: NAD(P)H-hydrate epimerase (283 aa).

The N-terminal 28 residues, 1 to 28, are a transit peptide targeting the mitochondrion; sequence MLGVRALFGIGLLVTSRGGFVLTHTRAC. A YjeF N-terminal domain is found at 61–270; the sequence is AQQIDEELFS…VLEQKYQLNL (210 aa). (6S)-NADPHX is bound at residue 115–119; sequence NNGGD. K(+) contacts are provided by Asn-116 and Asp-180. (6S)-NADPHX contacts are provided by residues 184-190 and Asp-213; that span reads GFSFKGA. Residue Ser-216 coordinates K(+).

Belongs to the NnrE/AIBP family. Homodimer. Interacts with apoa1a. Binds to high-density lipoprotein. It depends on K(+) as a cofactor.

It localises to the mitochondrion. Its subcellular location is the secreted. The catalysed reaction is (6R)-NADHX = (6S)-NADHX. The enzyme catalyses (6R)-NADPHX = (6S)-NADPHX. In terms of biological role, catalyzes the epimerization of the S- and R-forms of NAD(P)HX, a damaged form of NAD(P)H that is a result of enzymatic or heat-dependent hydration. This is a prerequisite for the S-specific NAD(P)H-hydrate dehydratase to allow the repair of both epimers of NAD(P)HX. The sequence is that of NAD(P)H-hydrate epimerase from Danio rerio (Zebrafish).